Reading from the N-terminus, the 113-residue chain is Large ribosomal subunit protein bL19 (113 aa).

It belongs to the bacterial ribosomal protein bL19 family.

This protein is located at the 30S-50S ribosomal subunit interface and may play a role in the structure and function of the aminoacyl-tRNA binding site. The chain is Large ribosomal subunit protein bL19 from Mycolicibacterium vanbaalenii (strain DSM 7251 / JCM 13017 / BCRC 16820 / KCTC 9966 / NRRL B-24157 / PYR-1) (Mycobacterium vanbaalenii).